The sequence spans 580 residues: Purine permease (580 aa).

12 helical membrane passes run 68 to 88 (PLVL…AGVI), 107 to 127 (SQYL…VQMF), 136 to 156 (YYVG…ITVA), 184 to 204 (YGAL…LSFM), 211 to 231 (ALFP…SLIG), 263 to 283 (LPWG…TIIL), 294 to 314 (SCAV…CGYF), 385 to 405 (LGNG…MSVF), 426 to 446 (CCFF…LVAI), 447 to 467 (PSSV…ISGV), 481 to 501 (FILT…DWFS), and 522 to 542 (LVMA…NLIL).

The protein belongs to the nucleobase:cation symporter-2 (NCS2) (TC 2.A.40) family.

It localises to the membrane. In terms of biological role, able to transport with low efficiency all natural purines as well as purine analogs. In Emericella nidulans (strain FGSC A4 / ATCC 38163 / CBS 112.46 / NRRL 194 / M139) (Aspergillus nidulans), this protein is Purine permease (uapC).